Here is a 349-residue protein sequence, read N- to C-terminus: Small ribosomal subunit biogenesis GTPase RsgA 2 (349 aa).

Residues 97–252 (AEQLIATNVD…IIDTPGMREL (156 aa)) form the CP-type G domain. Residues 142 to 145 (TKAD) and 194 to 202 (GSSGVGKST) each bind GTP. Zn(2+)-binding residues include cysteine 275, cysteine 280, histidine 282, and cysteine 288.

The protein belongs to the TRAFAC class YlqF/YawG GTPase family. RsgA subfamily. In terms of assembly, monomer. Associates with 30S ribosomal subunit, binds 16S rRNA. Zn(2+) is required as a cofactor.

It is found in the cytoplasm. One of several proteins that assist in the late maturation steps of the functional core of the 30S ribosomal subunit. Helps release RbfA from mature subunits. May play a role in the assembly of ribosomal proteins into the subunit. Circularly permuted GTPase that catalyzes slow GTP hydrolysis, GTPase activity is stimulated by the 30S ribosomal subunit. The sequence is that of Small ribosomal subunit biogenesis GTPase RsgA 2 from Vibrio vulnificus (strain CMCP6).